Consider the following 331-residue polypeptide: Probable staphylococcal-like nuclease CAN1 (331 aa).

A lipid anchor (N-myristoyl glycine) is attached at Gly-2. A lipid anchor (S-palmitoyl cysteine) is attached at Cys-10. One can recognise a TNase-like domain in the interval His-136–Ala-313. Asp-149 contacts Ca(2+). Arg-220 is a catalytic residue. Residue Asp-225 participates in Ca(2+) binding. Catalysis depends on residues Glu-228 and Arg-262. Residues Gly-306–Ala-331 are disordered. Residues Lys-318–Ala-331 show a composition bias toward basic and acidic residues.

This sequence belongs to the thermonuclease family. Requires Ca(2+) as cofactor.

It is found in the cell membrane. Its function is as follows. Enzyme that catalyzes the hydrolysis of both DNA and RNA at the 5' position of the phosphodiester bond. This Oryza sativa subsp. japonica (Rice) protein is Probable staphylococcal-like nuclease CAN1.